The chain runs to 90 residues: DNA-binding protein HU-alpha (90 aa).

It belongs to the bacterial histone-like protein family. As to quaternary structure, heterodimer of an alpha and a beta chain.

Histone-like DNA-binding protein which is capable of wrapping DNA to stabilize it, and thus to prevent its denaturation under extreme environmental conditions. The chain is DNA-binding protein HU-alpha (hupA) from Aeromonas hydrophila.